The sequence spans 355 residues: tRNA uridine(34) hydroxylase (355 aa).

The Rhodanese domain maps to 146–240 (KDPDALFVDM…YVRTAKKKDL (95 aa)). The Cysteine persulfide intermediate role is filled by cysteine 200.

The protein belongs to the TrhO family.

The catalysed reaction is uridine(34) in tRNA + AH2 + O2 = 5-hydroxyuridine(34) in tRNA + A + H2O. Its function is as follows. Catalyzes oxygen-dependent 5-hydroxyuridine (ho5U) modification at position 34 in tRNAs. In Hamiltonella defensa subsp. Acyrthosiphon pisum (strain 5AT), this protein is tRNA uridine(34) hydroxylase.